The primary structure comprises 309 residues: Transcription termination/antitermination protein NusG (309 aa).

Disordered regions lie at residues 1-24 (MSDPNLNDDATEPRGLAADTADDE) and 58-91 (EGDHIAETDEDIEAGAVETDEDVETDTDEDVEAG). Over residues 65-91 (TDEDIEAGAVETDEDVETDTDEDVEAG) the composition is skewed to acidic residues.

Belongs to the NusG family.

Its function is as follows. Participates in transcription elongation, termination and antitermination. This chain is Transcription termination/antitermination protein NusG, found in Streptomyces galbus.